The primary structure comprises 256 residues: Ribosomal RNA large subunit methyltransferase E (256 aa).

Residues G48, W50, D68, D86, and D111 each coordinate S-adenosyl-L-methionine. K151 (proton acceptor) is an active-site residue. The 59-residue stretch at 198–256 (PVSPGDELDATVVDIGSEGDGIIKIDGYTLFVPGVENGDSVRVRVTDLKSNVGFAEVIE) folds into the TRAM domain.

This sequence belongs to the class I-like SAM-binding methyltransferase superfamily. RNA methyltransferase RlmE family.

The protein localises to the cytoplasm. It catalyses the reaction uridine(2552) in 23S rRNA + S-adenosyl-L-methionine = 2'-O-methyluridine(2552) in 23S rRNA + S-adenosyl-L-homocysteine + H(+). Specifically methylates the uridine in position 2552 of 23S rRNA at the 2'-O position of the ribose in the fully assembled 50S ribosomal subunit. This chain is Ribosomal RNA large subunit methyltransferase E, found in Haloquadratum walsbyi (strain DSM 16790 / HBSQ001).